Reading from the N-terminus, the 236-residue chain is Octanoyltransferase (236 aa).

A BPL/LPL catalytic domain is found at 36–220; that stretch reads DQVPDTVLLL…HLAAVLGASS (185 aa). Residues 76-83, 150-152, and 163-165 contribute to the substrate site; these read RGGKITWH, AIG, and GFA. Catalysis depends on Cys-181, which acts as the Acyl-thioester intermediate.

It belongs to the LipB family.

The protein localises to the cytoplasm. The enzyme catalyses octanoyl-[ACP] + L-lysyl-[protein] = N(6)-octanoyl-L-lysyl-[protein] + holo-[ACP] + H(+). Its pathway is protein modification; protein lipoylation via endogenous pathway; protein N(6)-(lipoyl)lysine from octanoyl-[acyl-carrier-protein]: step 1/2. Its function is as follows. Catalyzes the transfer of endogenously produced octanoic acid from octanoyl-acyl-carrier-protein onto the lipoyl domains of lipoate-dependent enzymes. Lipoyl-ACP can also act as a substrate although octanoyl-ACP is likely to be the physiological substrate. This Thermobifida fusca (strain YX) protein is Octanoyltransferase.